A 287-amino-acid chain; its full sequence is Outer membrane protein TP0453 (287 aa).

Residues methionine 1–serine 24 form the signal peptide. Cysteine 25 carries the N-palmitoyl cysteine lipid modification. Cysteine 25 carries S-diacylglycerol cysteine lipidation. Amphipathic helix stretches follow at residues proline 36–valine 40, glutamate 56–isoleucine 63, lysine 69–aspartate 77, tyrosine 103–arginine 112, methionine 155–leucine 162, proline 172–threonine 179, glycine 194–leucine 202, phenylalanine 240–leucine 250, and alanine 270–serine 279.

In terms of assembly, a mix of monomer and dimers; may integrate into the membrane as a dimer. In terms of processing, palmitoylated upon expression of a fusion protein with first 46 residues fused to PhoA in E.coli.

It localises to the cell outer membrane. In terms of biological role, might be involved in ligand transport, alters membrane permeability at acidic pH (4.0 to 5.5). Incubation of the non-lipidated form with lipid vesicles increases their permeability. In Treponema pallidum (strain Nichols), this protein is Outer membrane protein TP0453.